The chain runs to 273 residues: Protein FAM216A (273 aa).

The segment at 1–47 (MLGQLLPHTARGLGAAEMPGQGPGSDWTERSSSAEPPAVAGTEGGGG) is disordered.

Belongs to the FAM216 family.

The protein is Protein FAM216A (FAM216A) of Homo sapiens (Human).